The primary structure comprises 473 residues: MALQTGEPRTLAEKIWDDHIVVSGGGCAPDLIYIDLHLVHEVTSPQAFDGLRLAGRRVRRPELTLATEDHNVPTVDIDQPIADPVSRTQVETLRRNCAEFGIRLHSMGDIEQGIVHVVGPQLGLTQPGMTIVCGDSHTSTHGAFGALAMGIGTSEVEHVLATQTLPLRPFKTMAVNVDGRLPDGVSAKDIILALIAKIGTGGGQGHVIEYRGSAIESLSMEGRMTICNMSIEAGARAGMVAPDETTYAFLRGRPHAPTGAQWDTALVYWQRLRTDVGAVFDTEVYLDAASLSPFVTWGTNPGQGVPLAAAVPDPQLMTDDAERQAAEKALAYMDLRPGTAMRDIAVDAVFVGSCTNGRIEDLRVVAEVLRGRKVADGVRMLIVPGSMRVRAQAEAEGLGEIFTDAGAQWRQAGCSMCLGMNPDQLASGERCAATSNRNFEGRQGAGGRTHLVSPAVAAATAVRGTLSSPADLN.

[4Fe-4S] cluster contacts are provided by cysteine 354, cysteine 414, and cysteine 417.

Belongs to the aconitase/IPM isomerase family. LeuC type 1 subfamily. In terms of assembly, heterodimer of LeuC and LeuD. Requires [4Fe-4S] cluster as cofactor.

The enzyme catalyses (2R,3S)-3-isopropylmalate = (2S)-2-isopropylmalate. It functions in the pathway amino-acid biosynthesis; L-leucine biosynthesis; L-leucine from 3-methyl-2-oxobutanoate: step 2/4. Functionally, catalyzes the isomerization between 2-isopropylmalate and 3-isopropylmalate, via the formation of 2-isopropylmaleate. This Mycobacterium tuberculosis (strain CDC 1551 / Oshkosh) protein is 3-isopropylmalate dehydratase large subunit.